Reading from the N-terminus, the 126-residue chain is Flagellar protein FliT (126 aa).

The tract at residues 1–50 (MASPHRLLKDYQQLLSLSQKILHLAVNGQWDTLVEQEIVYVQSVEGLVNT) is required for homodimerization. The segment at 60–98 (MRLHLRQILQEVMDNEAKVKQLLQKRMDELSSLMGQSLK) is fliD binding.

Belongs to the FliT family. In terms of assembly, homodimer. Interacts with FliD and FlhC.

It localises to the cytoplasm. Its subcellular location is the cytosol. Dual-function protein that regulates the transcription of class 2 flagellar operons and that also acts as an export chaperone for the filament-capping protein FliD. As a transcriptional regulator, acts as an anti-FlhDC factor; it directly binds FlhC, thus inhibiting the binding of the FlhC/FlhD complex to class 2 promoters, resulting in decreased expression of class 2 flagellar operons. As a chaperone, effects FliD transition to the membrane by preventing its premature polymerization, and by directing it to the export apparatus. This Pectobacterium carotovorum subsp. carotovorum (strain PC1) protein is Flagellar protein FliT.